The sequence spans 306 residues: HORMA domain-containing protein 2 (306 aa).

Positions 29 to 232 (HESLIMVKKL…TGFHSMKVKV (204 aa)) constitute an HORMA domain.

As to quaternary structure, interacts with HORMAD1. Post-translationally, phosphorylated in a SPO11-dependent manner.

The protein resides in the nucleus. Its subcellular location is the chromosome. Functionally, essential for synapsis surveillance during meiotic prophase via the recruitment of ATR activity. Plays a key role in the male mid-pachytene checkpoint and the female meiotic prophase checkpoint: required for efficient build-up of ATR activity on unsynapsed chromosome regions, a process believed to form the basis of meiotic silencing of unsynapsed chromatin (MSUC) and meiotic prophase quality control in both sexes. Required for the DNA double-strand break-independent, BRCA1-dependent activation of ATR on the sex chromosomes that is essential for normal sex body formation. The polypeptide is HORMA domain-containing protein 2 (HORMAD2) (Bos taurus (Bovine)).